A 143-amino-acid polypeptide reads, in one-letter code: Small ribosomal subunit protein uS12 (143 aa).

Pro-62 is subject to Hydroxyproline.

This sequence belongs to the universal ribosomal protein uS12 family. Component of the 40S small ribosomal subunit.

It is found in the cytoplasm. Its subcellular location is the cytosol. It localises to the rough endoplasmic reticulum. This Ciona intestinalis (Transparent sea squirt) protein is Small ribosomal subunit protein uS12 (RPS23).